Here is a 278-residue protein sequence, read N- to C-terminus: Ras-related protein Rab-40B (278 aa).

Residues S23, G26, and K27 each coordinate GTP. A switch-I region spans residues 41–49 (SPYGHPAGI). D69 contributes to the Mg(2+) binding site. G72, N126, and R127 together coordinate GTP. The tract at residues 72 to 88 (GQGRFCTIFRSYSRGAQ) is switch-II. Residues 175-228 (LLRHGMDRLWRPSKVLSLQDLCCRAVVSCTPVHLVDKLPLPIALRSHLKSFSMA) enclose the SOCS box domain. The disordered stretch occupies residues 242–278 (SLTTSSTHKRSSLRKVKLVRPPQSPPKNCTRNSCKIS). The span at 248–259 (THKRSSLRKVKL) shows a compositional bias: basic residues. The span at 267–278 (PKNCTRNSCKIS) shows a compositional bias: polar residues. C270 carries S-palmitoyl cysteine lipidation. A lipid anchor (S-geranylgeranyl cysteine) is attached at C275.

Belongs to the small GTPase superfamily. Rab family. In terms of assembly, component of the cullin-5-RING E3 ubiquitin-protein ligase complex (ECS(RAB40B) complex) composed of CUL5, Elongin BC (ELOB and ELOC), RNF7/RBX2 and RAB40B; RAB40B interaction with ECS complex is GTP-independent. Binds (GTP-bound) LIMA1; interaction promotes LIMA1 subcellular localization in lamellipodia during cell migration. Interacts (GTP-bound) with TKS5/SH3PXD2A (via PX domain); interaction promotes invadopodia-mediated extracellular matrix degradation. Requires Mg(2+) as cofactor.

The protein resides in the cell membrane. Its subcellular location is the cytoplasm. It is found in the cytosol. It localises to the cell projection. The protein localises to the lamellipodium membrane. The protein resides in the ruffle. The catalysed reaction is GTP + H2O = GDP + phosphate + H(+). The protein operates within protein modification; protein ubiquitination. Regulated by guanine nucleotide exchange factors (GEFs) which promote the exchange of bound GDP for free GTP. Regulated by GTPase activating proteins (GAPs) which increase the GTP hydrolysis activity. Inhibited by GDP dissociation inhibitors (GDIs). Functionally, RAB40B small GTPase acts as substrate-recognition components of the ECS(RAB40B) E3 ubiquitin ligase complex which mediates the ubiquitination of target proteins. The Rab40 subfamily belongs to the Rab family that are key regulators of intracellular membrane trafficking, from the formation of transport vesicles to their fusion with membranes. Rabs cycle between an inactive GDP-bound form and an active GTP-bound form that is able to recruit to membranes different sets of downstream effectors directly responsible for vesicle formation, movement, tethering and fusion. As part of the ECS(RAB40B) complex, GTP-bound RAB40B promotes LIMA1/EPLIN ubiquitination and degradation, thereby regulating leading-edge actin dynamics during cell migration. As part of the ECS(RAB40B) complex, GTP-bound RAB40B also ubiquitinates RAP2A GTPase which promotes its localization to lamellipodia and activation to drive cell migration. The ECS(RAB40B) complex does not mediate canonical ubiquitin-dependent degradation of RAP2. RAB40B also binds TKS5/SH3PXD2A effector independently from ECS complex to promote invadopodia-mediated extracellular matrix degradation. This Homo sapiens (Human) protein is Ras-related protein Rab-40B.